A 158-amino-acid chain; its full sequence is Putative metalloproteinase inhibitor tag-225 (158 aa).

The signal sequence occupies residues 1–20 (MQNLSLSLVILSVLIAVTLA). C21 contacts Zn(2+). Residues 21-25 (CKCRE) are involved in metalloproteinase-binding. 3 disulfide bridges follow: C21–C96, C23–C123, and C33–C158. One can recognise an NTR domain in the interval 21-158 (CKCREQSTKE…LQSQVKSIKC (138 aa)). An N-linked (GlcNAc...) asparagine glycan is attached at N79. The involved in metalloproteinase-binding stretch occupies residues 93 to 94 (AP).

The protein belongs to the protease inhibitor I35 (TIMP) family.

The protein localises to the secreted. Its function is as follows. Complexes with metalloproteinases and irreversibly inactivates them by binding to their catalytic zinc cofactor. The polypeptide is Putative metalloproteinase inhibitor tag-225 (tag-225) (Caenorhabditis elegans).